A 185-amino-acid chain; its full sequence is dCTP deaminase (185 aa).

Position 107–112 (107–112 (KSTYAR)) interacts with dCTP. Glu133 serves as the catalytic Proton donor/acceptor. The dCTP site is built by Gln152, Tyr166, and Gln176.

The protein belongs to the dCTP deaminase family. In terms of assembly, homotrimer.

It carries out the reaction dCTP + H2O + H(+) = dUTP + NH4(+). It participates in pyrimidine metabolism; dUMP biosynthesis; dUMP from dCTP (dUTP route): step 1/2. Functionally, catalyzes the deamination of dCTP to dUTP. This Nitratiruptor sp. (strain SB155-2) protein is dCTP deaminase.